The primary structure comprises 113 residues: Small ribosomal subunit protein uS17 (113 aa).

Belongs to the universal ribosomal protein uS17 family. Part of the 30S ribosomal subunit.

Its function is as follows. One of the primary rRNA binding proteins, it binds specifically to the 5'-end of 16S ribosomal RNA. The polypeptide is Small ribosomal subunit protein uS17 (Sulfurisphaera tokodaii (strain DSM 16993 / JCM 10545 / NBRC 100140 / 7) (Sulfolobus tokodaii)).